The sequence spans 304 residues: Non-specific ribonucleoside hydrolase RihC (304 aa).

H233 is an active-site residue.

The protein belongs to the IUNH family. RihC subfamily.

In terms of biological role, hydrolyzes both purine and pyrimidine ribonucleosides with a broad-substrate specificity. The polypeptide is Non-specific ribonucleoside hydrolase RihC (Escherichia coli O8 (strain IAI1)).